The following is a 250-amino-acid chain: Aquaporin TIP2-1 (250 aa).

The residue at position 1 (Met-1) is an N-acetylmethionine. At Met-1–Ala-20 the chain is on the cytoplasmic side. Ala-2 is modified (N-acetylalanine; in Aquaporin TIP2-1, N-terminally processed). A helical membrane pass occupies residues Tyr-21 to Ala-41. The Vacuolar segment spans residues Tyr-42 to Pro-54. A helical transmembrane segment spans residues Gly-55 to Ala-75. Topologically, residues Asn-76–Val-98 are cytoplasmic. An NPA 1 motif is present at residues Asn-83–Ala-85. A helical membrane pass occupies residues Ile-99–Leu-119. Residues Lys-120 to Glu-141 lie on the Vacuolar side of the membrane. A helical transmembrane segment spans residues Gly-142 to Ala-162. The Cytoplasmic segment spans residues Asp-163–Ser-168. Residues Leu-169 to Gly-189 form a helical membrane-spanning segment. The Vacuolar segment spans residues Pro-190–Trp-215. An NPA 2 motif is present at residues Asn-197–Ala-199. A helical membrane pass occupies residues Val-216 to Phe-236. Over Met-237–Phe-250 the chain is Cytoplasmic.

This sequence belongs to the MIP/aquaporin (TC 1.A.8) family. TIP (TC 1.A.8.10) subfamily. In terms of assembly, interacts with cucumber mosaic virus (CMV) Protein 1a. As to expression, strongly expressed in shoot, rosette, bolt and flowers. Also expressed in roots, flower buds and above ground.

The protein resides in the vacuole membrane. Aquaporin required to facilitate the transport of water from the vacuolar compartment to the cytoplasm. Does not promote glycerol permeability. Its function is impaired by Hg(2+). Transports urea in yeast cells and Xenopus laevis oocytes in a pH-independent manner. Transports methylammonium or ammonium in yeast cells and Xenopus laevis oocytes, preferentially at high medium pH. May participate in vacuolar compartmentation and detoxification of ammonium. This Arabidopsis thaliana (Mouse-ear cress) protein is Aquaporin TIP2-1 (TIP2-1).